The primary structure comprises 470 residues: Nucleoporin NUP49 (470 aa).

A compositionally biased stretch (polar residues) spans 1-13 (MSLFGTNTTSQTP). A disordered region spans residues 1-92 (MSLFGTNTTS…STTTTTSQPQ (92 aa)). GLFG repeat units lie at residues 17 to 20 (GLFG), 45 to 48 (GLFG), 63 to 66 (GLFG), 79 to 82 (GLFG), 96 to 99 (GLFG), 111 to 114 (GLFG), 127 to 130 (GLFG), 142 to 145 (GLFG), 156 to 159 (GLFG), 168 to 171 (GLFG), 181 to 184 (GLFG), and 193 to 197 (GLFGQ). A compositionally biased stretch (low complexity) spans 20–31 (GTTTSQSAQTGS). The segment covering 32–74 (LFGTATSQPQQTGGLFGSTATQTPSSQLQSTGLFGSTTATSQP) has biased composition (polar residues). Positions 75–92 (QQTGGLFGSTTTTTSQPQ) are enriched in low complexity. The disordered stretch occupies residues 196-221 (GQSTTQPQQQQNATPGLTMGQSTNTQ). Positions 197–206 (QSTTQPQQQQ) are enriched in low complexity. Over residues 207-221 (NATPGLTMGQSTNTQ) the composition is skewed to polar residues. Coiled coils occupy residues 239–270 (TRFN…EAVD) and 375–401 (FSKT…AHLT).

Belongs to the nucleoporin GLFG family. As to quaternary structure, component of the nuclear pore complex (NPC). NPC constitutes the exclusive means of nucleocytoplasmic transport. NPCs allow the passive diffusion of ions and small molecules and the active, nuclear transport receptor-mediated bidirectional transport of macromolecules such as proteins, RNAs, ribonucleoparticles (RNPs), and ribosomal subunits across the nuclear envelope. Due to its 8-fold rotational symmetry, all subunits are present with 8 copies or multiples thereof.

The protein localises to the nucleus. The protein resides in the nuclear pore complex. It is found in the nucleus membrane. Functionally, functions as a component of the nuclear pore complex (NPC). NPC components, collectively referred to as nucleoporins (NUPs), can play the role of both NPC structural components and of docking or interaction partners for transiently associated nuclear transport factors. Active directional transport is assured by both, a Phe-Gly (FG) repeat affinity gradient for these transport factors across the NPC and a transport cofactor concentration gradient across the nuclear envelope (GSP1 and GSP2 GTPases associated predominantly with GTP in the nucleus, with GDP in the cytoplasm). NUP49 plays an important role in several nuclear transport pathways including poly(A)+ RNA, tRNA, and pre-ribosome transport. This is Nucleoporin NUP49 (NUP49) from Chaetomium thermophilum (strain DSM 1495 / CBS 144.50 / IMI 039719) (Thermochaetoides thermophila).